The sequence spans 349 residues: Protein-glutamate methylesterase/protein-glutamine glutaminase (349 aa).

Positions 5–122 constitute a Response regulatory domain; that stretch reads RVLSVDDSAL…REGMLAYSEM (118 aa). D56 bears the 4-aspartylphosphate mark. The region spanning 152–344 is the CheB-type methylesterase domain; sequence LLSSEKLIAI…QQMLAKISAG (193 aa). Residues S164, H190, and D286 contribute to the active site.

It belongs to the CheB family. Phosphorylated by CheA. Phosphorylation of the N-terminal regulatory domain activates the methylesterase activity.

It is found in the cytoplasm. The enzyme catalyses [protein]-L-glutamate 5-O-methyl ester + H2O = L-glutamyl-[protein] + methanol + H(+). It carries out the reaction L-glutaminyl-[protein] + H2O = L-glutamyl-[protein] + NH4(+). Functionally, involved in chemotaxis. Part of a chemotaxis signal transduction system that modulates chemotaxis in response to various stimuli. Catalyzes the demethylation of specific methylglutamate residues introduced into the chemoreceptors (methyl-accepting chemotaxis proteins or MCP) by CheR. Also mediates the irreversible deamidation of specific glutamine residues to glutamic acid. This is Protein-glutamate methylesterase/protein-glutamine glutaminase from Escherichia coli O6:K15:H31 (strain 536 / UPEC).